The sequence spans 206 residues: Guanylate kinase (206 aa).

The region spanning 5 to 183 (FNLLILSGPS…SKEIILSIAK (179 aa)) is the Guanylate kinase-like domain. 12 to 19 (GPSGAGKS) provides a ligand contact to ATP.

It belongs to the guanylate kinase family.

The protein resides in the cytoplasm. It carries out the reaction GMP + ATP = GDP + ADP. In terms of biological role, essential for recycling GMP and indirectly, cGMP. The sequence is that of Guanylate kinase (gmk) from Helicobacter pylori (strain J99 / ATCC 700824) (Campylobacter pylori J99).